Consider the following 398-residue polypeptide: Tyrosine--tRNA ligase (398 aa).

The short motif at 42–51 (PTAPDLHLGH) is the 'HIGH' region element. Positions 226-230 (KMSKS) match the 'KMSKS' region motif. ATP is bound at residue Lys229. In terms of domain architecture, S4 RNA-binding spans 341–397 (AFLEAAGLVKSRGEAKRLIKEGALSVDGVRCDDANSPLASGEYVIKLGKKRFLRLTV).

Belongs to the class-I aminoacyl-tRNA synthetase family. TyrS type 2 subfamily. In terms of assembly, homodimer.

The protein localises to the cytoplasm. The enzyme catalyses tRNA(Tyr) + L-tyrosine + ATP = L-tyrosyl-tRNA(Tyr) + AMP + diphosphate + H(+). Functionally, catalyzes the attachment of tyrosine to tRNA(Tyr) in a two-step reaction: tyrosine is first activated by ATP to form Tyr-AMP and then transferred to the acceptor end of tRNA(Tyr). The polypeptide is Tyrosine--tRNA ligase (Nitratidesulfovibrio vulgaris (strain ATCC 29579 / DSM 644 / CCUG 34227 / NCIMB 8303 / VKM B-1760 / Hildenborough) (Desulfovibrio vulgaris)).